A 255-amino-acid chain; its full sequence is Syntaxin-6 (255 aa).

Position 2 is an N-acetylserine (S2). S2 is modified (phosphoserine). The segment at 2-168 (SMEDPFFVVK…QAQQQLIVEQ (167 aa)) is required for interaction with VPS51. Over 2 to 234 (SMEDPFFVVK…VSHMTSDRRQ (233 aa)) the chain is Cytoplasmic. Residues 41-74 (EEIDWTTNELRNNLRSIEWDLEDLDETISIVEAN) are a coiled coil. 2 positions are modified to phosphoserine: S129 and S152. The 63-residue stretch at 163-225 (QLIVEQQDEQ…DNVMKKLAKV (63 aa)) folds into the t-SNARE coiled-coil homology domain. A helical; Anchor for type IV membrane protein membrane pass occupies residues 235–255 (WCAIAILFAVLVVVLILFLVL).

It belongs to the syntaxin family. Identified in a complex containing STX6, STX12 and VAMP4. This complex also includes VTI1A. Binds EEA1. Interacts with VPS45A and GOPC. Interacts with MARCHF2; the interaction promotes MARCHF2-mediated ubiquitination and degradation of CFTR. Interacts with MARCHF3. Interacts with BLTP3B (via C-terminal coiled-coil domain). Interacts with BAIAP3; this interaction is increased in the presence of calcium. Interacts with VPS13B.

It localises to the golgi apparatus membrane. It is found in the golgi apparatus. Its subcellular location is the trans-Golgi network membrane. The protein localises to the recycling endosome membrane. In terms of biological role, SNARE promoting movement of transport vesicles to target membranes. Targets endosomes to the trans-Golgi network, and may therefore function in retrograde trafficking. Together with SNARE STX12, promotes movement of vesicles from endosomes to the cell membrane, and may therefore function in the endocytic recycling pathway. The protein is Syntaxin-6 (Stx6) of Mus musculus (Mouse).